Reading from the N-terminus, the 293-residue chain is Zinc metalloproteinase nas-2 (293 aa).

Positions 1 to 17 (MIFPLLLTLILPNFVAP) are cleaved as a signal peptide. The propeptide occupies 18-67 (KVLEPEKDDEIAVSTQREKTFFDMKLILTKLPTFEPSKYGHINIPLRKKR). The Peptidase M12A domain occupies 67–260 (RGIALHPLQW…ININTFYKCK (194 aa)). N-linked (GlcNAc...) asparagine glycosylation is present at Asn111. 2 cysteine pairs are disulfide-bonded: Cys114–Cys259 and Cys139–Cys169. His180 contributes to the Zn(2+) binding site. The active site involves Glu181. Residues His184 and His190 each coordinate Zn(2+). Residue Asn287 is glycosylated (N-linked (GlcNAc...) asparagine).

Zn(2+) is required as a cofactor.

The protein localises to the secreted. Metalloprotease. The sequence is that of Zinc metalloproteinase nas-2 (nas-2) from Caenorhabditis elegans.